A 132-amino-acid chain; its full sequence is Small ribosomal subunit protein uS8 (132 aa).

The protein belongs to the universal ribosomal protein uS8 family. In terms of assembly, part of the 30S ribosomal subunit. Contacts proteins S5 and S12.

Functionally, one of the primary rRNA binding proteins, it binds directly to 16S rRNA central domain where it helps coordinate assembly of the platform of the 30S subunit. The sequence is that of Small ribosomal subunit protein uS8 from Corynebacterium kroppenstedtii (strain DSM 44385 / JCM 11950 / CIP 105744 / CCUG 35717).